The following is a 208-amino-acid chain: dITP/XTP pyrophosphatase (208 aa).

Serine 15–lysine 20 contributes to the substrate binding site. Mg(2+) is bound by residues glutamate 47 and aspartate 76. Aspartate 76 acts as the Proton acceptor in catalysis. Residues serine 77, histidine 157–aspartate 160, lysine 180, and histidine 185–arginine 186 contribute to the substrate site.

The protein belongs to the HAM1 NTPase family. In terms of assembly, homodimer. The cofactor is Mg(2+).

The enzyme catalyses XTP + H2O = XMP + diphosphate + H(+). The catalysed reaction is dITP + H2O = dIMP + diphosphate + H(+). It carries out the reaction ITP + H2O = IMP + diphosphate + H(+). Functionally, pyrophosphatase that catalyzes the hydrolysis of nucleoside triphosphates to their monophosphate derivatives, with a high preference for the non-canonical purine nucleotides XTP (xanthosine triphosphate), dITP (deoxyinosine triphosphate) and ITP. Seems to function as a house-cleaning enzyme that removes non-canonical purine nucleotides from the nucleotide pool, thus preventing their incorporation into DNA/RNA and avoiding chromosomal lesions. In Gluconobacter oxydans (strain 621H) (Gluconobacter suboxydans), this protein is dITP/XTP pyrophosphatase.